Here is a 400-residue protein sequence, read N- to C-terminus: Enoyl-[acyl-carrier-protein] reductase [NADH] (400 aa).

Residues Gly48 to Tyr53, Phe74 to Glu75, Asp111 to Ala112, and Leu139 to Ala140 contribute to the NAD(+) site. Residue Tyr225 coordinates substrate. The active-site Proton donor is Tyr235. Residues Lys244 and Val273–Thr275 contribute to the NAD(+) site.

The protein belongs to the TER reductase family. In terms of assembly, monomer.

It carries out the reaction a 2,3-saturated acyl-[ACP] + NAD(+) = a (2E)-enoyl-[ACP] + NADH + H(+). It participates in lipid metabolism; fatty acid biosynthesis. Involved in the final reduction of the elongation cycle of fatty acid synthesis (FAS II). Catalyzes the reduction of a carbon-carbon double bond in an enoyl moiety that is covalently linked to an acyl carrier protein (ACP). This is Enoyl-[acyl-carrier-protein] reductase [NADH] from Shewanella woodyi (strain ATCC 51908 / MS32).